The chain runs to 690 residues: Eukaryotic translation initiation factor 3 subunit B (690 aa).

Residues 1-11 (MAKKKSEEHSG) show a composition bias toward basic and acidic residues. The interval 1–36 (MAKKKSEEHSGADANDSDYTEEPNFDDPPNFVDNIS) is disordered. Over residues 15–25 (NDSDYTEEPNF) the composition is skewed to acidic residues. The region spanning 57–141 (SVVVVDNMPK…YTFAVNLFTD (85 aa)) is the RRM domain. 5 WD repeats span residues 207–246 (TRERFTDTFVKWSPLGTYVVTFHKPGVAIWGGSSFQKIQK), 292–331 (GDGMSVLSMFRWSHDDKFVARMGENSIHIYETPSFYLLDL), 334–369 (IKIPGIRGFSWSPTDNVIAYWVEEQNQIPARVTLME), 442–484 (EIRE…KPSL), and 530–575 (PDHF…IRRT). Residues 614 to 645 (QKDRLRLTRASKELLEKRSQLRETFMEYRNKR) adopt a coiled-coil conformation.

The protein belongs to the eIF-3 subunit B family. As to quaternary structure, component of the eukaryotic translation initiation factor 3 (eIF-3) complex. The eIF-3 complex interacts with pix. Interacts with mxt.

The protein resides in the cytoplasm. Its function is as follows. RNA-binding component of the eukaryotic translation initiation factor 3 (eIF-3) complex, which is involved in protein synthesis of a specialized repertoire of mRNAs and, together with other initiation factors, stimulates binding of mRNA and methionyl-tRNAi to the 40S ribosome. The eIF-3 complex specifically targets and initiates translation of a subset of mRNAs involved in cell proliferation. This chain is Eukaryotic translation initiation factor 3 subunit B, found in Drosophila virilis (Fruit fly).